Here is a 637-residue protein sequence, read N- to C-terminus: 3D-(3,5/4)-trihydroxycyclohexane-1,2-dione hydrolase (637 aa).

Glu-66 contributes to the thiamine diphosphate binding site. Residues 442 to 522 (SLPGDLQRLW…INVLLFDNSG (81 aa)) form a thiamine pyrophosphate binding region. The Mg(2+) site is built by Asp-493 and Asn-520.

It belongs to the TPP enzyme family. The cofactor is Mg(2+). Requires thiamine diphosphate as cofactor.

The enzyme catalyses 3D-3,5/4-trihydroxycyclohexane-1,2-dione + H2O = 5-deoxy-D-glucuronate + H(+). It functions in the pathway polyol metabolism; myo-inositol degradation into acetyl-CoA; acetyl-CoA from myo-inositol: step 3/7. Functionally, involved in the cleavage of the C1-C2 bond of 3D-(3,5/4)-trihydroxycyclohexane-1,2-dione (THcHDO) to yield 5-deoxy-glucuronate (5DG). The sequence is that of 3D-(3,5/4)-trihydroxycyclohexane-1,2-dione hydrolase (iolD) from Bacillus subtilis (strain 168).